The chain runs to 71 residues: Pro-glucagon (71 aa).

This sequence belongs to the glucagon family.

The protein resides in the secreted. Plays a key role in glucose metabolism and homeostasis. Regulates blood glucose by increasing gluconeogenesis and decreasing glycolysis. The polypeptide is Pro-glucagon (gcg) (Ictalurus punctatus (Channel catfish)).